The following is a 486-amino-acid chain: 23S rRNA (uracil(1939)-C(5))-methyltransferase RlmD (486 aa).

The TRAM domain occupies 14 to 76; sequence AAQDGSGLPE…NHWEQANLTA (63 aa). The [4Fe-4S] cluster site is built by Cys89, Cys99, Cys102, and Cys181. The S-adenosyl-L-methionine site is built by Gln289, Phe318, Asn323, Glu339, Asn374, and Asp395. Cys442 serves as the catalytic Nucleophile.

Belongs to the class I-like SAM-binding methyltransferase superfamily. RNA M5U methyltransferase family. RlmD subfamily.

It carries out the reaction uridine(1939) in 23S rRNA + S-adenosyl-L-methionine = 5-methyluridine(1939) in 23S rRNA + S-adenosyl-L-homocysteine + H(+). In terms of biological role, catalyzes the formation of 5-methyl-uridine at position 1939 (m5U1939) in 23S rRNA. The polypeptide is 23S rRNA (uracil(1939)-C(5))-methyltransferase RlmD (Verminephrobacter eiseniae (strain EF01-2)).